A 450-amino-acid polypeptide reads, in one-letter code: Mitochondrial distribution and morphology protein 10 (450 aa).

This sequence belongs to the MDM10 family. In terms of assembly, component of the ER-mitochondria encounter structure (ERMES) or MDM complex, composed of MMM1, MDM10, MDM12 and MDM34. Associates with the mitochondrial outer membrane sorting assembly machinery SAM(core) complex.

It is found in the mitochondrion outer membrane. Its function is as follows. Component of the ERMES/MDM complex, which serves as a molecular tether to connect the endoplasmic reticulum and mitochondria. Components of this complex are involved in the control of mitochondrial shape and protein biogenesis and may function in phospholipid exchange. MDM10 is involved in the late assembly steps of the general translocase of the mitochondrial outer membrane (TOM complex). Functions in the TOM40-specific route of the assembly of outer membrane beta-barrel proteins, including the association of TOM40 with the receptor TOM22 and small TOM proteins. Can associate with the SAM(core) complex as well as the MDM12-MMM1 complex, both involved in late steps of the major beta-barrel assembly pathway, that is responsible for biogenesis of all outer membrane beta-barrel proteins. May act as a switch that shuttles between both complexes and channels precursor proteins into the TOM40-specific pathway. Plays a role in mitochondrial morphology and in the inheritance of mitochondria. In Paracoccidioides lutzii (strain ATCC MYA-826 / Pb01) (Paracoccidioides brasiliensis), this protein is Mitochondrial distribution and morphology protein 10.